Reading from the N-terminus, the 152-residue chain is MLRGANAINLDTKGRIAIPTRYRDWLGDTCQGQFVCTIDIQSPCLLIYPLNEWLLIETKLRALSSTNPQERRLQRLILGYATESELDKSGRALIAPTLRQHAKLQKKVMLVGQLNKFELWDEDMWNQQIKNDLEDGLPTGIELSSGLREFSL.

SpoVT-AbrB domains follow at residues 5-52 (ANAI…PLNE) and 81-124 (ATES…DEDM).

This sequence belongs to the MraZ family. Forms oligomers.

The protein localises to the cytoplasm. It localises to the nucleoid. The polypeptide is Transcriptional regulator MraZ (Psychromonas ingrahamii (strain DSM 17664 / CCUG 51855 / 37)).